The chain runs to 618 residues: Baculoviral IAP repeat-containing protein 2 (618 aa).

BIR repeat units follow at residues 46–113 (ELYR…CSFI), 184–250 (EEAR…CPFL), and 269–336 (HAAR…CEFL). Cys306, Cys309, His326, and Cys333 together coordinate Zn(2+). Residues 453 to 543 (MASDDLSLIR…TLYKNLFVDK (91 aa)) form the CARD domain. The RING-type zinc finger occupies 571 to 606 (CKVCMDKEVSVVFIPCGHLVVCQECAPSLRKCPICR).

This sequence belongs to the IAP family. Interacts with DIABLO/SMAC and with PRSS25; these interactions inhibit apoptotic suppressor activity. Interacts with CASP9. Interacts (via BIR domains) with TRAF2; the interaction is required for IKBKE ubiquitination. Interacts with E2F1, RIPK1, RIPK2, RIPK3, RIPK4, BIRC5/survivin and USP19. HSP90AB1. Interacts with UBXN1. Interacts with GSK3B. Interacts with several death receptors, inclusing FAS, TNFRSF10A and TNFRSF10B. Recruited to TNFRSF10B in the absence of receptor stimulation. When TNFRSF10B is stimulated, further recruited to the receptor and cleaved by caspases. Proteolytic fragments remain associated with TNFRSF10B. Auto-ubiquitinated and degraded by the proteasome in apoptotic cells. In terms of processing, upon stimulation of death receptors, including TNFRSF10B, recruited to receptors and cleaved by caspases. Proteolytic fragments remain associated with the receptors. This cleavage presumably inactivates the protein. Present in many fetal and adult tissues. Mainly expressed in adult skeletal muscle, thymus, testis, ovary, and pancreas, low or absent in brain and peripheral blood leukocytes.

The protein resides in the cytoplasm. The protein localises to the nucleus. It catalyses the reaction S-ubiquitinyl-[E2 ubiquitin-conjugating enzyme]-L-cysteine + [acceptor protein]-L-lysine = [E2 ubiquitin-conjugating enzyme]-L-cysteine + N(6)-ubiquitinyl-[acceptor protein]-L-lysine.. Its activity is regulated as follows. The CARD domain inhibits the activation of E3 ubiquitin ligase activity by preventing RING domain dimerization and E2 ubiquitin donor binding and activation. The CARD domain-mediated autoinhibition of the E3 ubiquitin-protein ligase activity suppresses cell proliferation and migration. USP19 regulates the stability of BIRC2/c-IAP1 by preventing its ubiquitination. Its function is as follows. Multi-functional protein which regulates not only caspases and apoptosis, but also modulates inflammatory signaling and immunity, mitogenic kinase signaling, and cell proliferation, as well as cell invasion and metastasis. Acts as an E3 ubiquitin-protein ligase regulating NF-kappa-B signaling and regulates both canonical and non-canonical NF-kappa-B signaling by acting in opposite directions: acts as a positive regulator of the canonical pathway and suppresses constitutive activation of non-canonical NF-kappa-B signaling. The target proteins for its E3 ubiquitin-protein ligase activity include: RIPK1, RIPK2, RIPK3, RIPK4, CASP3, CASP7, CASP8, TRAF2, DIABLO/SMAC, MAP3K14/NIK, MAP3K5/ASK1, IKBKG/NEMO, IKBKE and MXD1/MAD1. Can also function as an E3 ubiquitin-protein ligase of the NEDD8 conjugation pathway, targeting effector caspases for neddylation and inactivation. Acts as an important regulator of innate immune signaling via regulation of Toll-like receptors (TLRs), Nodlike receptors (NLRs) and RIG-I like receptors (RLRs), collectively referred to as pattern recognition receptors (PRRs). Protects cells from spontaneous formation of the ripoptosome, a large multi-protein complex that has the capability to kill cancer cells in a caspase-dependent and caspase-independent manner. Suppresses ripoptosome formation by ubiquitinating RIPK1 and CASP8. Can stimulate the transcriptional activity of E2F1. Plays a role in the modulation of the cell cycle. The protein is Baculoviral IAP repeat-containing protein 2 (BIRC2) of Homo sapiens (Human).